We begin with the raw amino-acid sequence, 575 residues long: Cyclic nucleotide-gated channel alpha-4 (575 aa).

Residues 1 to 38 lie on the Cytoplasmic side of the membrane; sequence MSQDGKVKTTESTPPAPTKARKWLPVLDPSGDYYYWWL. A helical membrane pass occupies residues 39–60; sequence NTMVFPIMYNLIIVVCRACFPD. Residues 61–70 lie on the Extracellular side of the membrane; it reads LQHSYLVAWF. Residues 71–91 traverse the membrane as a helical segment; sequence VLDYTSDLLYLLDIGVRFHTG. Residues 92-116 are Cytoplasmic-facing; the sequence is FLEQGILVVDKGMIASRYVRTWSFL. Residues 117-135 traverse the membrane as a helical segment; the sequence is LDLASLVPTDAAYVQLGPH. Residues 136–140 are Extracellular-facing; the sequence is IPTLR. The chain crosses the membrane as a helical span at residues 141–159; it reads LNRFLRVPRLFEAFDRTET. The Cytoplasmic portion of the chain corresponds to 160–166; sequence RTAYPNA. The segment at 164 to 272 is ion conduction pathway; sequence PNAFRIAKLM…GSMSSVIYNM (109 aa). A helical membrane pass occupies residues 167–190; sequence FRIAKLMLYIFVVIHWNSCLYFAL. Over 191–213 the chain is Extracellular; the sequence is SRYLGFGRDAWVYPDPAQPGFER. 2 helical membrane passes run 214–248 and 249–273; these read LRRQ…LFMV and GDFL…YNMN. Positions 231–234 are selectivity filter; it reads TVGD. The tract at residues 274–350 is C-linker; sequence TADAAFYPDH…STLSRVQIFQ (77 aa). Over 274 to 575 the chain is Cytoplasmic; that stretch reads TADAAFYPDH…AGQAGPSGIE (302 aa). The IQ-type motif lies at 292–302; the sequence is LQHVNKRLERR. 348–471 lines the a nucleoside 3',5'-cyclic phosphate pocket; it reads IFQNCEASLL…AVMEEKGREI (124 aa). The segment at 354–474 is cyclic nucleotide-binding domain; that stretch reads ASLLEELVLK…EEKGREILLK (121 aa). 3',5'-cyclic GMP is bound by residues glycine 414, serine 417, arginine 430, and threonine 431. 3',5'-cyclic AMP contacts are provided by arginine 430 and threonine 431. Positions 493-547 form a coiled coil; sequence TESRLKGLDQQLDDLQTKFARLLAELESSALKIAYRIERLEWQTREWPMPEDMGE. The disordered stretch occupies residues 537–575; that stretch reads REWPMPEDMGEADDEAEPGEGTSKDGEGKAGQAGPSGIE. The segment covering 544–554 has biased composition (acidic residues); the sequence is DMGEADDEAEP.

Belongs to the cyclic nucleotide-gated cation channel (TC 1.A.1.5) family. CNGA4 subfamily. In terms of assembly, the olfactory cyclic nucleotide-gated channel is an heterotetramer composed of CNGA2, CNGA4 and CNGB1b subunits with 2:1:1 stoichiometry. May form homomeric channels gated by nitric oxide. In terms of processing, N-glycosylated. In terms of tissue distribution, olfactory neurons. Expressed in olfactory sensory cilia (at protein level).

It is found in the cell projection. The protein resides in the cilium membrane. It catalyses the reaction Ca(2+)(in) = Ca(2+)(out). The catalysed reaction is Na(+)(in) = Na(+)(out). It carries out the reaction K(+)(in) = K(+)(out). The enzyme catalyses NH4(+)(in) = NH4(+)(out). It catalyses the reaction Rb(+)(in) = Rb(+)(out). The catalysed reaction is Li(+)(in) = Li(+)(out). It carries out the reaction Cs(+)(in) = Cs(+)(out). With respect to regulation, ca(2+)-calmodulin exerts its inhibitory effect in cAMP sensitivity by binding to IQ-like motif of CNGA4 and preferably binds to the channel in the closed state. Inhibition by PIP3 of the CNG channel probably occurs via CGNA2 binding. Ca(2+) currents are inhibited by pimozide, an L-type Ca(2+) channel blocker. Pore-forming subunit of the olfactory cyclic nucleotide-gated channel. Operates in the cilia of olfactory sensory neurons where chemical stimulation of the odorant is converted to an electrical signal. Mediates odorant-induced cAMP-dependent Ca(2+) influx triggering neuron depolarization. The rise of intracellular Ca(2+) levels potentiates the olfactory response by activating Ca(2+)-dependent Cl(-) channels, but it also serves as a negative feedback signal to desensitize the channel for rapid adaptation to odorants. Conducts cAMP- and cGMP-gated ion currents, with permeability for monovalent and divalent cations. May conduct nitric oxide-gated Ca(2+) currents relevant to neurons of vomeronasal organ, a system involved in the perception of pheromones. The protein is Cyclic nucleotide-gated channel alpha-4 of Rattus norvegicus (Rat).